The primary structure comprises 440 residues: Glutamyl-tRNA reductase (440 aa).

Substrate-binding positions include T55–R58, S115, E120–Q122, and Q126. The active-site Nucleophile is the C56. G199 to G204 lines the NADP(+) pocket.

It belongs to the glutamyl-tRNA reductase family. In terms of assembly, homodimer.

The catalysed reaction is (S)-4-amino-5-oxopentanoate + tRNA(Glu) + NADP(+) = L-glutamyl-tRNA(Glu) + NADPH + H(+). The protein operates within porphyrin-containing compound metabolism; protoporphyrin-IX biosynthesis; 5-aminolevulinate from L-glutamyl-tRNA(Glu): step 1/2. Functionally, catalyzes the NADPH-dependent reduction of glutamyl-tRNA(Glu) to glutamate 1-semialdehyde (GSA). The protein is Glutamyl-tRNA reductase of Helicobacter hepaticus (strain ATCC 51449 / 3B1).